Here is a 188-residue protein sequence, read N- to C-terminus: GTP cyclohydrolase 1 (188 aa).

Zn(2+)-binding residues include Cys-76, His-79, and Cys-148.

It belongs to the GTP cyclohydrolase I family. Homomer.

It catalyses the reaction GTP + H2O = 7,8-dihydroneopterin 3'-triphosphate + formate + H(+). Its pathway is cofactor biosynthesis; 7,8-dihydroneopterin triphosphate biosynthesis; 7,8-dihydroneopterin triphosphate from GTP: step 1/1. The chain is GTP cyclohydrolase 1 from Pelotomaculum thermopropionicum (strain DSM 13744 / JCM 10971 / SI).